The sequence spans 523 residues: Sensory neuron membrane protein 1 (523 aa).

The Cytoplasmic segment spans residues 1 to 10; it reads MRLARGIKYA. A helical transmembrane segment spans residues 11 to 31; the sequence is VIGAGVALFGVLFGWVMFPAI. At 32 to 458 the chain is on the extracellular side; sequence LKSQLKKEMA…NQLFIPKRIV (427 aa). N-linked (GlcNAc...) asparagine glycosylation is found at Asn67 and Asn229. 3 cysteine pairs are disulfide-bonded: Cys268/Cys333, Cys297/Cys352, and Cys335/Cys341. The N-linked (GlcNAc...) asparagine glycan is linked to Asn440. Residues 459–479 traverse the membrane as a helical segment; that stretch reads SVIRWWLLSFGMLAALGGVIF. Over 480-523 the chain is Cytoplasmic; that stretch reads HFKDDIMRIAIKGDSSVTKVNPEDGEQKDVSVIGQSHEPPKINM. Residues 499–523 are disordered; the sequence is VNPEDGEQKDVSVIGQSHEPPKINM.

It belongs to the CD36 family. As to expression, localizes to both male and female antennae but not the leg, wing, gut, head, or thoracic ganglia. Detected throughout the sensory epithelium, associating with both sex-pheromone sensilla and plant-volatile sensilla. Differentially expressed both among different sensilla and different neurons within a given sensillum. Expression coincides with that of several other olfactory-specific proteins that are involved in odor detection.

Its subcellular location is the cell membrane. Its function is as follows. Plays an olfactory role that is not restricted to pheromone sensitivity. This Manduca sexta (Tobacco hawkmoth) protein is Sensory neuron membrane protein 1.